Consider the following 142-residue polypeptide: Hdr-like menaquinol oxidoreductase cytochrome c subunit (142 aa).

Over 1–6 the chain is Cytoplasmic; the sequence is MYNKKY. Residues 7–27 traverse the membrane as a helical segment; that stretch reads VIPLILVFLIGFFTPYWYNAM. Topologically, residues 28–142 are extracellular; the sequence is AGTLGHVPTL…GIEELSKYFS (115 aa). Residues Cys-93, Cys-96, His-97, Cys-104, Cys-107, His-108, Cys-117, Cys-120, and His-121 each contribute to the heme site.

Consists of five subunits: an integral membrane subunit, a cytochrome b-like subunit, a cytochrome c subunit and two iron-sulfur subunits. Post-translationally, binds 3 heme groups per subunit.

The protein localises to the cell membrane. Has menaquinol-oxidizing activity. HmeA, HmeB and HmeE subunits may together catalyze electron transfer from menaquinol to cytochrome c. In Archaeoglobus fulgidus (strain ATCC 49558 / DSM 4304 / JCM 9628 / NBRC 100126 / VC-16), this protein is Hdr-like menaquinol oxidoreductase cytochrome c subunit (hmeE).